A 793-amino-acid polypeptide reads, in one-letter code: Short transient receptor potential channel 1 (793 aa).

Residues 1–30 are disordered; that stretch reads MMAALYPSTDLSGASSSSLPSSPSSSSPNE. Residues 1–345 lie on the Cytoplasmic side of the membrane; the sequence is MMAALYPSTD…FGQMSGYRRK (345 aa). Residues 15 to 28 are compositionally biased toward low complexity; sequence SSSSLPSSPSSSSP. 4 ANK repeats span residues 46-75, 83-109, 111-156, and 158-180; these read LNEKLFLLACDKGDYYMVKEILEENSSGDL, LGRNAVTITIENENLDILQLLLDYGCQ, ADAL…EYST, and MDVAPVILAAHRNNYEILTMLLK. Zn(2+) is bound by residues H189, C193, C195, and C198. An intramembrane region (discontinuously helical) is located at residues 346-379; that stretch reads PTCKKIMTVLTVGIFWPVLSLCYLIAPKSQFGRI. The Cytoplasmic segment spans residues 380 to 386; that stretch reads IHTPFMK. Residues 387–404 form a helical membrane-spanning segment; it reads FIIHGASYFTFLLLLNLY. Over 405–422 the chain is Extracellular; sequence SLVYHEDKKNTMGPALER. Residues 423–439 form a helical membrane-spanning segment; it reads IDYLLILWIIGMIWSDI. The Cytoplasmic portion of the chain corresponds to 440–455; the sequence is KRLWYEGLEDFLEESR. The chain crosses the membrane as a helical span at residues 456-475; that stretch reads NQLSFVMNSLYLATFALKEE. Residues 476 to 496 lie on the Extracellular side of the membrane; sequence AHNKFHDFADRKDWDAFHPTL. The chain crosses the membrane as a helical span at residues 497 to 517; the sequence is VAEGLFAFANVLSYLRLFFYV. At 518–536 the chain is on the cytoplasmic side; it reads YTSSILGPLQISMGRMLQD. Residues 537–558 form a helical membrane-spanning segment; it reads FGKFLGMFLLVLFSFTIGLTQL. The Extracellular segment spans residues 559–623; the sequence is YDKGYTPKEQ…GEELQSFVGA (65 aa). C571 and C576 form a disulfide bridge. The chain crosses the membrane as a helical span at residues 624 to 644; the sequence is FIVGTYNVVVVIVLTKLLVAM. Over 645–793 the chain is Cytoplasmic; sequence LHKSFQLIAN…SKYAMFYPRN (149 aa).

Belongs to the transient receptor (TC 1.A.4) family. STrpC subfamily. TRPC1 sub-subfamily. In terms of assembly, heterotetramer with TRPC4 and/or TRPC5. Forms a heteromeric ion channel with TRPC4, with a 1:3 TRPC1:TRPC4 stoichiometry. Unlike other TRP channel proteins, does not form a homomeric channel. Interacts with TRPC4AP. Interacts with ITPR3. Interacts with MX1 and RNF24. Interacts with FKBP4. Interacts with PLSCR1. Interacts with PKD2L2. Forms a heterotetramer with PKD2 with a 2:2 stoichiometry; has distinct channel properties separate from PKD2 or TRPC1 homomers alone. In terms of processing, activation of PRKCA induces phosphorylation of TRPC1 and subsequent Ca2+ entry into cells.

It is found in the cell membrane. The enzyme catalyses Ca(2+)(in) = Ca(2+)(out). It carries out the reaction Na(+)(in) = Na(+)(out). The catalysed reaction is Li(+)(in) = Li(+)(out). It catalyses the reaction Cs(+)(in) = Cs(+)(out). Its activity is regulated as follows. May be operated by a phosphatidylinositol second messenger system activated by receptor tyrosine kinases or G-protein coupled receptors. Also activated by intracellular calcium store depletion. In terms of biological role, forms a receptor-activated non-selective calcium permeant cation channel. Forms a heteromeric ion channel with TRPC4 or TRPC5 that has reduced calcium permeability compared to the homomeric TRPC4 or TRPC5 channel. Also permeable to monovalent ions including sodium, lithium and cesium ions. This Bos taurus (Bovine) protein is Short transient receptor potential channel 1 (TRPC1).